The sequence spans 70 residues: Conotoxin ba3a (70 aa).

The first 20 residues, 1–20, serve as a signal peptide directing secretion; the sequence is MLKIGVMLSIILVLFPLATL. Positions 21–55 are excised as a propeptide; that stretch reads QLVAERPAAERYAENKQDLNPDERRNYLVDLGVER.

As to expression, expressed by the venom duct.

The protein localises to the secreted. This chain is Conotoxin ba3a, found in Conus bayani (Bayan's cone).